Here is a 355-residue protein sequence, read N- to C-terminus: MSKSSIYGLTYEKLKDWLIEHGEKRFRAEQVWNWLYKKRINSFDEMNNVNQSAIQLLKDNFVLHTMGEEIRQESQDGTIKFLFKLEDGNLIETVLMRFHYGLSVCVTTQVGCNIGCTFCASGLLRKSRDLSSGEVVEQIMNVQKHLDERGEKDRVSHIVVMGIGEPFDNYNNLMDFLYTVNDDRGLNIGARHITVSTSGLAHKIYEFADDPIQVNLAISLHAPNDELRTKIMKINRAFPIDKLMKSVDYYLQKKNRRITYEYIMLDDVNDHKKEAIELANLIKNHRHLAYVNLIPYNTVDEHIDYRRSKSENIQAFYETLTELGINCGVRWENGADIDAACGQLRSKQIKKSKAV.

Residue Glu-92 is the Proton acceptor of the active site. The Radical SAM core domain occupies 98 to 330 (FHYGLSVCVT…TELGINCGVR (233 aa)). Cys-105 and Cys-341 are disulfide-bonded. Residues Cys-112, Cys-116, and Cys-119 each coordinate [4Fe-4S] cluster. Residues 164 to 165 (GE), Ser-196, 219 to 221 (SLH), and Asn-297 each bind S-adenosyl-L-methionine. Residue Cys-341 is the S-methylcysteine intermediate of the active site.

Belongs to the radical SAM superfamily. RlmN family. Requires [4Fe-4S] cluster as cofactor.

The protein localises to the cytoplasm. It carries out the reaction adenosine(2503) in 23S rRNA + 2 reduced [2Fe-2S]-[ferredoxin] + 2 S-adenosyl-L-methionine = 2-methyladenosine(2503) in 23S rRNA + 5'-deoxyadenosine + L-methionine + 2 oxidized [2Fe-2S]-[ferredoxin] + S-adenosyl-L-homocysteine. The catalysed reaction is adenosine(37) in tRNA + 2 reduced [2Fe-2S]-[ferredoxin] + 2 S-adenosyl-L-methionine = 2-methyladenosine(37) in tRNA + 5'-deoxyadenosine + L-methionine + 2 oxidized [2Fe-2S]-[ferredoxin] + S-adenosyl-L-homocysteine. Specifically methylates position 2 of adenine 2503 in 23S rRNA and position 2 of adenine 37 in tRNAs. This chain is Probable dual-specificity RNA methyltransferase RlmN, found in Oceanobacillus iheyensis (strain DSM 14371 / CIP 107618 / JCM 11309 / KCTC 3954 / HTE831).